Reading from the N-terminus, the 386-residue chain is Zinc transporter 7-A (386 aa).

The Cytoplasmic portion of the chain corresponds to 1-37 (MLPLSIKDDEYKPPKFNLARKVSGWIRSIFSDSTSRN). Residues 38-58 (LFCFLCLNLSFAFVELFYGIW) traverse the membrane as a helical segment. The Lumenal segment spans residues 59 to 67 (SNSLGLISD). Residues 68–88 (SFHMFFDCTALLAGLAASVIS) traverse the membrane as a helical segment. Residues 89–102 (RWKTNEAFSYGYVR) are Cytoplasmic-facing. The chain crosses the membrane as a helical span at residues 103–123 (AEVLAGFVNGLFLIFTAFFIF). Topologically, residues 124 to 140 (SEGVERALDTPEVHHER) are lumenal. A helical transmembrane segment spans residues 141–161 (LLPVSIMGLLVNIIGIFVFQH). Residues 161–222 (HGGGHGHSHE…GHSHDHSPKH (62 aa)) form a his-rich loop region. Topologically, residues 162–246 (GGGHGHSHES…KGSSKQILEG (85 aa)) are cytoplasmic. Residues 167–239 (HSHESGHGHS…DEPPEEHKGS (73 aa)) are disordered. The segment covering 228–238 (CHDEPPEEHKG) has biased composition (basic and acidic residues). The chain crosses the membrane as a helical span at residues 247–267 (VFLHIVADTLGSVGVIFSTIL). Over 268–272 (MQRYG) the chain is Lumenal. A helical membrane pass occupies residues 273–293 (LMIADPICSMLIALLIFVSVI). Residues 294–386 (PLLKQSIGIL…LYVQIDFAAI (93 aa)) lie on the Cytoplasmic side of the membrane.

This sequence belongs to the cation diffusion facilitator (CDF) transporter (TC 2.A.4) family. SLC30A subfamily. In terms of assembly, homooligomer.

The protein resides in the golgi apparatus membrane. Its subcellular location is the cytoplasmic vesicle. The protein localises to the golgi apparatus. It is found in the trans-Golgi network. It localises to the sarcoplasmic reticulum. The protein resides in the mitochondrion. It carries out the reaction Zn(2+)(in) = Zn(2+)(out). Functionally, zinc ion transporter mediating zinc entry from the cytosol into the lumen of organelles along the secretory pathway. By contributing to zinc ion homeostasis within the early secretory pathway, regulates the activation and folding of enzymes like alkaline phosphatases. This Xenopus laevis (African clawed frog) protein is Zinc transporter 7-A (slc30a7-a).